Here is a 258-residue protein sequence, read N- to C-terminus: Imidazole glycerol phosphate synthase subunit HisF (258 aa).

Residues Asp-11 and Asp-130 contribute to the active site.

It belongs to the HisA/HisF family. As to quaternary structure, heterodimer of HisH and HisF.

It localises to the cytoplasm. It carries out the reaction 5-[(5-phospho-1-deoxy-D-ribulos-1-ylimino)methylamino]-1-(5-phospho-beta-D-ribosyl)imidazole-4-carboxamide + L-glutamine = D-erythro-1-(imidazol-4-yl)glycerol 3-phosphate + 5-amino-1-(5-phospho-beta-D-ribosyl)imidazole-4-carboxamide + L-glutamate + H(+). Its pathway is amino-acid biosynthesis; L-histidine biosynthesis; L-histidine from 5-phospho-alpha-D-ribose 1-diphosphate: step 5/9. In terms of biological role, IGPS catalyzes the conversion of PRFAR and glutamine to IGP, AICAR and glutamate. The HisF subunit catalyzes the cyclization activity that produces IGP and AICAR from PRFAR using the ammonia provided by the HisH subunit. In Stenotrophomonas maltophilia (strain R551-3), this protein is Imidazole glycerol phosphate synthase subunit HisF.